Reading from the N-terminus, the 199-residue chain is uncharacterized protein (199 aa).

Residues Met-1–Val-30 form a disordered region. Residues Arg-71–Arg-101 adopt a coiled-coil conformation.

This is an uncharacterized protein from Homo sapiens (Human).